Consider the following 62-residue polypeptide: Photosystem II reaction center protein Z (62 aa).

2 helical membrane passes run Ala8–Ala28 and Phe41–Ile61.

Belongs to the PsbZ family. PSII is composed of 1 copy each of membrane proteins PsbA, PsbB, PsbC, PsbD, PsbE, PsbF, PsbH, PsbI, PsbJ, PsbK, PsbL, PsbM, PsbT, PsbY, PsbZ, Psb30/Ycf12, at least 3 peripheral proteins of the oxygen-evolving complex and a large number of cofactors. It forms dimeric complexes.

The protein localises to the plastid. It localises to the chloroplast thylakoid membrane. In terms of biological role, may control the interaction of photosystem II (PSII) cores with the light-harvesting antenna, regulates electron flow through the 2 photosystem reaction centers. PSII is a light-driven water plastoquinone oxidoreductase, using light energy to abstract electrons from H(2)O, generating a proton gradient subsequently used for ATP formation. The protein is Photosystem II reaction center protein Z of Piper cenocladum (Ant piper).